The chain runs to 328 residues: D-cysteine desulfhydrase (328 aa).

An N6-(pyridoxal phosphate)lysine modification is found at Lys-51.

This sequence belongs to the ACC deaminase/D-cysteine desulfhydrase family. As to quaternary structure, homodimer. It depends on pyridoxal 5'-phosphate as a cofactor.

The catalysed reaction is D-cysteine + H2O = hydrogen sulfide + pyruvate + NH4(+) + H(+). Functionally, catalyzes the alpha,beta-elimination reaction of D-cysteine and of several D-cysteine derivatives. It could be a defense mechanism against D-cysteine. This Escherichia coli O6:H1 (strain CFT073 / ATCC 700928 / UPEC) protein is D-cysteine desulfhydrase.